A 647-amino-acid chain; its full sequence is Spindle pole body-associated protein VIK1 (647 aa).

Residues 36–51 (NTTNTMNGSRPSSMKS) show a composition bias toward polar residues. Residues 36–55 (NTTNTMNGSRPSSMKSSLAL) are disordered. Positions 202-350 (DHEITEEISQ…SKQEKFYNDT (149 aa)) form a coiled coil.

In terms of assembly, interacts with KAR3; the interaction is direct.

It is found in the cytoplasm. The protein localises to the cytoskeleton. The protein resides in the microtubule organizing center. It localises to the spindle pole body. Its subcellular location is the nucleus. In terms of biological role, together with the minus end-directed microtubule motor KAR3, plays a role in microtubule organization. Recruits KAR3 to microtubules, and together they may stabilize the polymers. The KAR3-VIK1 heterodimer cross-links anti-parallel microtubules. Targets and/or maintains KAR3 at the spindle pole body during vegetative growth. The polypeptide is Spindle pole body-associated protein VIK1 (VIK1) (Saccharomyces cerevisiae (strain ATCC 204508 / S288c) (Baker's yeast)).